A 1279-amino-acid polypeptide reads, in one-letter code: MSGTKWTDEQRQAIFTKDCNLLVAAGAGAGKTAVLVQRIIEKILDKGEPIDIDKLLVVTFTNAAAAEMRERIGDAISKGLDEDPESKVLRKQLTLLNKSNIMTIHSFCLQVIKNNFHTMEIDPNFRICDETEGILMKQEAIDELFDELYEIENEDFINLVESYASRKDTRLQEVVLELHRFAKSAPFSYDWLLNMAEEFNVGEEFNFEETPWADMIMEDMKVLLHGFKNMLQQSIDVILNSEGIDYYYEPFKMDLSFINSLLEKSSFKEFRGEIIAYDFPKLPLKRNKDADKEAKERVKKLRDKVKKKIVELKNILDSYENEFIKKEFIFLYPSMKALSNLVILFDKKYEAKKRERDLIDFNDIEHLCLSILTDKNSEGHIIPSDIALDYRKKFAEVLIDEYQDSNLVQEVIMSMVSRVKGYWSFYNGQLMFNEEEINLEEPQICLDIPNRFMVGDVKQSIYRFRQAKPEIFLDKYNEYSEEEGTKNRKVKLFKNFRSRKEVINGVNYLFKQIMSKTIGELDYTEEEALKVGASYGEEVKGEPIELCLMDKKYEISEEVLKEYNVDEEEALDNIQLEGRLVAKKIQKLVGNNLEGGLKVFDKKLGEYRNLQYRDIVILMRATSNWAPIFVEELAKEGIPVFADTNSGYFDTAEIKTMISLLQIIDNPLQDIPLLSVLRSPIASFTDDELIDIRMVNKNITFYECMEIIYRLYKNEKLDSYYSFYIEDENKINKIIKDMNEKLKNKICSFIEKLKLWREKSIHIDIDEFIWFLYVETGYYGYAGALQAGEQRQANLRILFQRAKQYAKTSYKGLFNFINFINKLKFSSGDMGSAKILGENENVVRIMSIHKSKGLEFPVVILSGTGKNFNMTDLNKNILFHRDLGYGPDYVDTERRIAYPSLVKNIIKNKIRLETLSEEMRILYVALTRAREKLIITGLINNMDKTVEDWLNLSEDKNKVPEYAVMSGKTYLDWIGPALIKHKDAVSFREELKMTSELSNIVDDKSKWKIELWNKRELLKEKVEEDEVEISEKIKETLMNLEESNYKEEIYKRLSFKYKYDNASSIPTKLSVSDVKKQFILDEKENTEELFKKLELRKPMFMEEKKKISPSERGTIIHLFMQHLDLKKAENEEDIKEQINRLIEREFITYEQSKVISPYKILKFCRGELGKRILNSNNVNKEMPFSIEIPALEIYKELDKEIYKDEKLIIQGVIDCYFEEEDGLVLLDYKTDYVNDIEEIKNRYEIQIKYYEEALNRITGKNVKDKYLYLFSVDNYIKID.

Residues 4–499 form the UvrD-like helicase ATP-binding domain; that stretch reads TKWTDEQRQA…VKLFKNFRSR (496 aa). 25 to 32 contributes to the ATP binding site; it reads AGAGAGKT. In terms of domain architecture, UvrD-like helicase C-terminal spans 526–853; that stretch reads EEALKVGASY…RIMSIHKSKG (328 aa).

Belongs to the helicase family. AddA subfamily. Heterodimer of AddA and AddB/RexB. Requires Mg(2+) as cofactor.

It catalyses the reaction Couples ATP hydrolysis with the unwinding of duplex DNA by translocating in the 3'-5' direction.. It carries out the reaction ATP + H2O = ADP + phosphate + H(+). Functionally, the heterodimer acts as both an ATP-dependent DNA helicase and an ATP-dependent, dual-direction single-stranded exonuclease. Recognizes the chi site generating a DNA molecule suitable for the initiation of homologous recombination. The AddA nuclease domain is required for chi fragment generation; this subunit has the helicase and 3' -&gt; 5' nuclease activities. The chain is ATP-dependent helicase/nuclease subunit A from Clostridium botulinum (strain ATCC 19397 / Type A).